The primary structure comprises 438 residues: Keratin, type I cytoskeletal 13 (438 aa).

Residues 1–95 are head; sequence MSCRFQSSSM…SVDGGLLSGN (95 aa). Residues Arg27 and Arg35 each carry the omega-N-methylarginine modification. The segment at 96–131 is coil; sequence EKITMQNLNDRLASYLEKVRALEAANADLEVKIRDW. Residues 96–408 form the IF rod domain; it reads EKITMQNLND…SLLEGQDAKM (313 aa). The segment at 132–150 is linker 1; that stretch reads HLKQSPTSPERDYSAYYKT. Residues 151 to 242 are coil 1B; the sequence is IEELRIKILE…KNHEEEMKEF (92 aa). The tract at residues 243-265 is linker 12; that stretch reads SNQAVGQVNVEMDATPGIDLTRV. The interval 266-404 is coil 2; the sequence is LAEMREQYEA…ATYRSLLEGQ (139 aa). The tail stretch occupies residues 405 to 438; it reads DAKMTGFNTGGNSTTTSNTSTSPSTSGRPDFRKY. A disordered region spans residues 408–438; it reads MTGFNTGGNSTTTSNTSTSPSTSGRPDFRKY. Over residues 409–431 the composition is skewed to low complexity; it reads TGFNTGGNSTTTSNTSTSPSTSG.

Belongs to the intermediate filament family. Heterotetramer of two type I and two type II keratins. In terms of processing, O-glycosylated; glycans consist of single N-acetylglucosamine residues.

Type 1 keratin. Maintains postnatal tongue mucosal cell homeostasis and tissue organization in response to mechanical stress, potentially via regulation of the G1/S phase cyclins CCNE1 and CCNE2. The protein is Keratin, type I cytoskeletal 13 of Rattus norvegicus (Rat).